Reading from the N-terminus, the 248-residue chain is Probable transcriptional regulatory protein RPE_4771 (248 aa).

The segment at methionine 1–lysine 21 is disordered.

Belongs to the TACO1 family.

It is found in the cytoplasm. The protein is Probable transcriptional regulatory protein RPE_4771 of Rhodopseudomonas palustris (strain BisA53).